The chain runs to 57 residues: UPF0391 membrane protein Patl_0263 (57 aa).

The next 2 membrane-spanning stretches (helical) occupy residues 8-28 (FFVL…GVAA) and 30-50 (IAKV…VLAF).

It belongs to the UPF0391 family.

It localises to the cell membrane. This is UPF0391 membrane protein Patl_0263 from Pseudoalteromonas atlantica (strain T6c / ATCC BAA-1087).